The sequence spans 307 residues: MGGPLMWALLLPLLLHQAGSQTSSCSVLSGYMDWTKEYFDTCLNFSGKILTQLPQNQSLRARSVQLLDLSANGLQRLPWSFFRDLEQLQLLIVTNNSLDFVDRALXXXGCGLELLADCSCALLDWHTDRQDNCSGPELPRCLDVPTGAWHNLSVFLDVSCPSGLTKIAIGALAASGSLLLVLAIAGPVLAWRFCRHRMDQNLSKTWASQDGSRSGSGRQPRYSSQGRRPKSPANTPPRSSTPDYENVFVGPPAARHQWDELRSPPSEGGDFYMTYDSLQHESQPVYCNLQSLSQVPLDDEEYVVPGR.

Residues 1-20 (MGGPLMWALLLPLLLHQAGS) form the signal peptide. At 21 to 168 (QTSSCSVLSG…SCPSGLTKIA (148 aa)) the chain is on the extracellular side. Asparagine 44 and asparagine 56 each carry an N-linked (GlcNAc...) asparagine glycan. LRR repeat units lie at residues 63–86 (SVQL…RDLE) and 87–110 (QLQL…XXGC). Asparagine 95, asparagine 132, and asparagine 151 each carry an N-linked (GlcNAc...) asparagine glycan. Residues 169-189 (IGALAASGSLLLVLAIAGPVL) traverse the membrane as a helical segment. Residues 190–307 (AWRFCRHRMD…DDEEYVVPGR (118 aa)) are Cytoplasmic-facing. The segment at 205–249 (TWASQDGSRSGSGRQPRYSSQGRRPKSPANTPPRSSTPDYENVFV) is disordered. A compositionally biased stretch (low complexity) spans 211–226 (GSRSGSGRQPRYSSQG). Over residues 232–243 (PANTPPRSSTPD) the composition is skewed to polar residues. At tyrosine 286 the chain carries Phosphotyrosine.

As to quaternary structure, interacts with RIGI. Interacts with SQSTM1. Interacts with p65/RELA; this interaction promotes the degradation of RELA through autophagy.

Its subcellular location is the membrane. The protein resides in the cytoplasm. Plays a role in the inhibition of RLR-mediated type I interferon signaling pathway by targeting RIGI for autophagic degradation. Interacts specifically with ISG15-associated RIGI to promote interaction between RIGI and the autophagic cargo receptor p62/SQSTM1 to mediate RIGI degradation via selective autophagy. Plays also a role in the inhibition of NF-kappa-B signaling pathway and inflammatory response by promoting the degradation of p65/RELA. In Bos taurus (Bovine), this protein is Leucine-rich repeat-containing protein 25 (LRRC25).